Reading from the N-terminus, the 673-residue chain is NADH-quinone oxidoreductase chain 3 (673 aa).

The region spanning 5–90 is the 2Fe-2S ferredoxin-type domain; it reads RKIKIDDTII…PSEIRTNSPM (86 aa). Residues cysteine 37, cysteine 48, cysteine 51, and cysteine 66 each contribute to the [2Fe-2S] cluster site. The 4Fe-4S His(Cys)3-ligated-type domain occupies 90–129; the sequence is MVKKAREGVMEFLLINHPLDCPICDQGGECDLQDQAMAYG. 8 residues coordinate [4Fe-4S] cluster: histidine 106, cysteine 110, cysteine 113, cysteine 119, cysteine 158, cysteine 161, cysteine 164, and cysteine 208. Residues 227 to 283 form the 4Fe-4S Mo/W bis-MGD-type domain; it reads LTKTESIDVMDALGSSIRIDTKGREVMRILPRNHDGVNEEWISDKTRFVWDGLRRQR.

Belongs to the complex I 75 kDa subunit family. NDH-1 is composed of at least 14 different subunits, Nqo1 to Nqo14. The complex has a L-shaped structure, with the hydrophobic arm (subunits Nqo7, Nqo8, Nqo10 to Nqo14) embedded in the inner membrane and the hydrophilic peripheral arm (subunits Nqo1 to Nqo6, Nqo9) protruding into the bacterial cytoplasm. The hydrophilic domain contains all the redox centers. [2Fe-2S] cluster is required as a cofactor. It depends on [4Fe-4S] cluster as a cofactor.

The protein localises to the cell inner membrane. It carries out the reaction a quinone + NADH + 5 H(+)(in) = a quinol + NAD(+) + 4 H(+)(out). NDH-1 shuttles electrons from NADH, via FMN and iron-sulfur (Fe-S) centers, to quinones in the respiratory chain. The immediate electron acceptor for the enzyme in this species is believed to be ubiquinone. Couples the redox reaction to proton translocation (for every two electrons transferred, four hydrogen ions are translocated across the cytoplasmic membrane), and thus conserves the redox energy in a proton gradient. The sequence is that of NADH-quinone oxidoreductase chain 3 from Paracoccus denitrificans.